A 34-amino-acid chain; its full sequence is Conotoxin S4.3 (34 aa).

Gln-1 is subject to Pyrrolidone carboxylic acid. At Glu-3 the chain carries 4-carboxyglutamate. O-linked (HexNAc...) serine glycosylation is present at Ser-7. An O-linked (HexNAc...) threonine glycan is attached at Thr-9. 4-hydroxyproline is present on residues Pro-17, Pro-22, Pro-31, and Pro-32.

Belongs to the conotoxin A superfamily. In terms of processing, contains 3 disulfide bonds. In terms of tissue distribution, expressed by the venom duct.

It localises to the secreted. Functionally, probable neurotoxin with ion channel inhibitor activity. The polypeptide is Conotoxin S4.3 (Conus striatus (Striated cone)).